We begin with the raw amino-acid sequence, 461 residues long: uncharacterized protein (461 aa).

13 consecutive transmembrane segments (helical) span residues 13–33 (GIIF…LPFE), 54–74 (ALHV…LGLV), 81–101 (VGFA…ATAL), 120–140 (GNLF…SMWM), 170–190 (VFVL…TLVG), 211–231 (YGLP…YIIF), 256–276 (FIIF…NPFI), 286–306 (IASF…STGV), 314–334 (SNTD…SAVL), 349–369 (FMID…FIIF), 377–397 (TASA…LGMP), 399–419 (IGLA…PVAT), and 439–459 (VGFL…YMFW).

This sequence belongs to the SLC13A/DASS transporter (TC 2.A.47) family. NADC subfamily.

The protein resides in the cell membrane. This is an uncharacterized protein from Haemophilus influenzae (strain ATCC 51907 / DSM 11121 / KW20 / Rd).